Reading from the N-terminus, the 221-residue chain is Small ribosomal subunit protein uS3c (221 aa).

A KH type-2 domain is found at 43–121 (IQNYIQKNMR…KLKIAITKIA (79 aa)).

This sequence belongs to the universal ribosomal protein uS3 family. Part of the 30S ribosomal subunit.

It localises to the plastid. It is found in the chloroplast. This Jasminum nudiflorum (Winter jasmine) protein is Small ribosomal subunit protein uS3c (rps3).